Consider the following 157-residue polypeptide: Transcription elongation factor GreA (157 aa).

The protein belongs to the GreA/GreB family.

Necessary for efficient RNA polymerase transcription elongation past template-encoded arresting sites. The arresting sites in DNA have the property of trapping a certain fraction of elongating RNA polymerases that pass through, resulting in locked ternary complexes. Cleavage of the nascent transcript by cleavage factors such as GreA or GreB allows the resumption of elongation from the new 3'terminus. GreA releases sequences of 2 to 3 nucleotides. The sequence is that of Transcription elongation factor GreA from Phenylobacterium zucineum (strain HLK1).